The primary structure comprises 390 residues: Transforming growth factor beta-1 proprotein (390 aa).

A signal peptide spans 1–29 (MPPSGLRLLPLLLPLLWLLVLTPGRPAAG). The tract at residues 30–74 (LSTCKTIDMELVKRKRIEAIRGQILSKLRLASPPSQGEVPPGPLP) is straightjacket domain. Residues 75–271 (EAVLALYNST…ATPLERAQHL (197 aa)) are arm domain. N-linked (GlcNAc...) asparagine glycosylation is found at Asn-82, Asn-136, and Asn-176. The interval 226 to 252 (DSRDNTLQVDINGFTTGRRGDLATIHG) is bowtie tail. A Cell attachment site motif is present at residues 244–246 (RGD). Intrachain disulfides connect Cys-285-Cys-294, Cys-293-Cys-356, Cys-322-Cys-387, and Cys-326-Cys-389.

Belongs to the TGF-beta family. Homodimer; disulfide-linked. Interacts with the serine proteases, HTRA1 and HTRA3: the interaction with either inhibits TGFB1-mediated signaling and the HTRA protease activity is required for this inhibition. May interact with THSD4; this interaction may lead to sequestration by FBN1 microfibril assembly and attenuation of TGFB signaling. Interacts with CD109, DPT and ASPN. Interacts with EFEMP2. Interacts with TSKU; the interaction contributes to regulation of the hair cycle. In terms of assembly, homodimer; disulfide-linked. Interacts with transforming growth factor beta-1 (TGF-beta-1) chain; interaction is non-covalent and maintains TGF-beta-1 in a latent state; each latency-associated peptide (LAP) monomer interacts with TGF-beta-1 in the other monomer. Interacts with LTBP1; leading to regulation of TGF-beta-1 activation. Interacts with LRRC32/GARP; leading to regulation of TGF-beta-1 activation on the surface of activated regulatory T-cells (Tregs). Interacts with LRRC33/NRROS; leading to regulation of TGF-beta-1 in macrophages and microglia. Interacts (via cell attachment site) with integrins ITGAV and ITGB6 (ITGAV:ITGB6), leading to release of the active TGF-beta-1. Interacts with NREP; the interaction results in a decrease in TGFB1 autoinduction. Interacts with HSP90AB1; inhibits latent TGFB1 activation. Interact with PSG9; leading to TGFB1 activation. Interacts with TGFBR3. As to quaternary structure, homodimer; disulfide-linked. Interacts with TGF-beta receptors (TGFBR1 and TGFBR2), leading to signal transduction. Transforming growth factor beta-1 proprotein: The precursor proprotein is cleaved in the Golgi apparatus by FURIN to form Transforming growth factor beta-1 (TGF-beta-1) and Latency-associated peptide (LAP) chains, which remain non-covalently linked, rendering TGF-beta-1 inactive. Post-translationally, N-glycosylated. Deglycosylation leads to activation of Transforming growth factor beta-1 (TGF-beta-1); mechanisms triggering deglycosylation-driven activation of TGF-beta-1 are however unclear. In terms of tissue distribution, highly expressed in bone. Abundantly expressed in articular cartilage and chondrocytes and is increased in osteoarthritis (OA). Colocalizes with ASPN in chondrocytes within OA lesions of articular cartilage.

The protein localises to the secreted. The protein resides in the extracellular space. It is found in the extracellular matrix. Functionally, transforming growth factor beta-1 proprotein: Precursor of the Latency-associated peptide (LAP) and Transforming growth factor beta-1 (TGF-beta-1) chains, which constitute the regulatory and active subunit of TGF-beta-1, respectively. Required to maintain the Transforming growth factor beta-1 (TGF-beta-1) chain in a latent state during storage in extracellular matrix. Associates non-covalently with TGF-beta-1 and regulates its activation via interaction with 'milieu molecules', such as LTBP1, LRRC32/GARP and LRRC33/NRROS, that control activation of TGF-beta-1. Interaction with LRRC33/NRROS regulates activation of TGF-beta-1 in macrophages and microglia. Interaction with LRRC32/GARP controls activation of TGF-beta-1 on the surface of activated regulatory T-cells (Tregs). Interaction with integrins (ITGAV:ITGB6 or ITGAV:ITGB8) results in distortion of the Latency-associated peptide chain and subsequent release of the active TGF-beta-1. In terms of biological role, multifunctional protein that regulates the growth and differentiation of various cell types and is involved in various processes, such as normal development, immune function, microglia function and responses to neurodegeneration. Activation into mature form follows different steps: following cleavage of the proprotein in the Golgi apparatus, Latency-associated peptide (LAP) and Transforming growth factor beta-1 (TGF-beta-1) chains remain non-covalently linked rendering TGF-beta-1 inactive during storage in extracellular matrix. At the same time, LAP chain interacts with 'milieu molecules', such as LTBP1, LRRC32/GARP and LRRC33/NRROS that control activation of TGF-beta-1 and maintain it in a latent state during storage in extracellular milieus. TGF-beta-1 is released from LAP by integrins (ITGAV:ITGB6 or ITGAV:ITGB8): integrin-binding to LAP stabilizes an alternative conformation of the LAP bowtie tail and results in distortion of the LAP chain and subsequent release of the active TGF-beta-1. Once activated following release of LAP, TGF-beta-1 acts by binding to TGF-beta receptors (TGFBR1 and TGFBR2), which transduce signal. While expressed by many cells types, TGF-beta-1 only has a very localized range of action within cell environment thanks to fine regulation of its activation by Latency-associated peptide chain (LAP) and 'milieu molecules'. Plays an important role in bone remodeling: acts as a potent stimulator of osteoblastic bone formation, causing chemotaxis, proliferation and differentiation in committed osteoblasts. Can promote either T-helper 17 cells (Th17) or regulatory T-cells (Treg) lineage differentiation in a concentration-dependent manner. At high concentrations, leads to FOXP3-mediated suppression of RORC and down-regulation of IL-17 expression, favoring Treg cell development. At low concentrations in concert with IL-6 and IL-21, leads to expression of the IL-17 and IL-23 receptors, favoring differentiation to Th17 cells. Stimulates sustained production of collagen through the activation of CREB3L1 by regulated intramembrane proteolysis (RIP). Mediates SMAD2/3 activation by inducing its phosphorylation and subsequent translocation to the nucleus. Positively regulates odontoblastic differentiation in dental papilla cells, via promotion of IPO7-mediated translocation of phosphorylated SMAD2 to the nucleus and subsequent transcription of target genes. Can induce epithelial-to-mesenchymal transition (EMT) and cell migration in various cell types. This is Transforming growth factor beta-1 proprotein from Homo sapiens (Human).